Reading from the N-terminus, the 393-residue chain is Short-chain dehydrogenase/reductase family 42E member 1 (393 aa).

Tyr152 (proton acceptor) is an active-site residue. Lys156 provides a ligand contact to NAD(+). 2 consecutive transmembrane segments (helical) span residues 282–302 and 371–391; these read LPLT…FILG and GLLV…SVIL.

This sequence belongs to the 3-beta-HSD family.

The protein resides in the membrane. This is Short-chain dehydrogenase/reductase family 42E member 1 (SDR42E1) from Homo sapiens (Human).